The chain runs to 416 residues: 3-hydroxy-3-methylglutaryl coenzyme A reductase AN1593 (416 aa).

Glutamate 103 acts as the Charge relay system in catalysis. Residue asparagine 167 is glycosylated (N-linked (GlcNAc...) asparagine). The active-site Charge relay system is lysine 236. Asparagine 277 carries N-linked (GlcNAc...) asparagine glycosylation. Aspartate 312 serves as the catalytic Charge relay system. The chain crosses the membrane as a helical span at residues 380–400 (LALLVAAGVLAGELSLCSALS). Histidine 408 serves as the catalytic Proton donor.

Belongs to the HMG-CoA reductase family.

The protein localises to the membrane. It carries out the reaction (R)-mevalonate + 2 NADP(+) + CoA = (3S)-3-hydroxy-3-methylglutaryl-CoA + 2 NADPH + 2 H(+). Its pathway is metabolic intermediate biosynthesis; (R)-mevalonate biosynthesis; (R)-mevalonate from acetyl-CoA: step 3/3. 3-hydroxy-3-methylglutaryl coenzyme A reductase; part of the gene cluster that mediates the biosynthesis of the diterpene ent-pimara-8(14),15-diene (PD). Within the cluster, the HMG-CoA reductase AN1593 functions in the mevalonate pathway, which produces isoprenoid precursors. The geranylgeranyl pyrophosphate (GGPP) synthase AN1592 is needed in the formation of GGPP, the precursor for diterpenes. Lastly, the pimaradiene synthase pbcA performs the 2 cyclization steps that convert GGPP to ent-pimara-8(14),15-diene. The putative roles of the remaining cluster enzymes in ent-pimara-8(14),15-diene biosynthesis is unclear. The cytochrome P450 monooxygenase AN1598, the glutathione S-transferase AN1595, the oxidoreductases AN1596 and AN1597 probably function as decorative enzymes. It is possible that in biological conditions the compound is oxidized to ent-pimara-8(14),15-dien-19-oic acid, which is a bioactive diterpene compound predominant in many plant extracts. The chain is 3-hydroxy-3-methylglutaryl coenzyme A reductase AN1593 from Emericella nidulans (strain FGSC A4 / ATCC 38163 / CBS 112.46 / NRRL 194 / M139) (Aspergillus nidulans).